Reading from the N-terminus, the 305-residue chain is ATP synthase F(0) complex subunit B2, mitochondrial (305 aa).

The N-terminal 22 residues, 1–22 (MSLSRCLPLGQNARVIIIPARL), are a transit peptide targeting the mitochondrion.

This sequence belongs to the eukaryotic ATPase B chain family. As to quaternary structure, subunit of the F-type ATPase which has 2 components, CF(1) - the catalytic core - and CF(0) - the membrane proton channel.

The protein localises to the mitochondrion. It is found in the mitochondrion inner membrane. Mitochondrial membrane ATP synthase (F(1)F(0) ATP synthase or Complex V) produces ATP from ADP in the presence of a proton gradient across the membrane which is generated by electron transport complexes of the respiratory chain. F-type ATPases consist of two structural domains, F(1) - containing the extramembraneous catalytic core, and F(0) - containing the membrane proton channel, linked together by a central stalk and a peripheral stalk. During catalysis, ATP synthesis in the catalytic domain of F(1) is coupled via a rotary mechanism of the central stalk subunits to proton translocation. Part of the complex F(0) domain and the peripheric stalk, which acts as a stator to hold the subunits of the catalytic subcomplexes relative to the rotary elements. Plays a role in somatic development. Does not play a role in germline development. The protein is ATP synthase F(0) complex subunit B2, mitochondrial of Caenorhabditis elegans.